We begin with the raw amino-acid sequence, 189 residues long: Protein shisa-like-2A (189 aa).

Helical transmembrane passes span 48-68 (SFFPYEHNYMWWLSIGALVGL) and 70-90 (TAAVVLLAFLITACVLCYLFI). The segment at 98 to 189 (LDPGLSLQTT…PTPGPHGPVP (92 aa)) is disordered. Positions 140–171 (NTHLESNKKQTVSPTCLPQNQFMATVTASNIP) are enriched in polar residues.

It belongs to the shisa family.

Its subcellular location is the membrane. The sequence is that of Protein shisa-like-2A (Shisal2a) from Mus musculus (Mouse).